The sequence spans 122 residues: Large ribosomal subunit protein bL12 (122 aa).

This sequence belongs to the bacterial ribosomal protein bL12 family. As to quaternary structure, homodimer. Part of the ribosomal stalk of the 50S ribosomal subunit. Forms a multimeric L10(L12)X complex, where L10 forms an elongated spine to which 2 to 4 L12 dimers bind in a sequential fashion. Binds GTP-bound translation factors.

Its function is as follows. Forms part of the ribosomal stalk which helps the ribosome interact with GTP-bound translation factors. Is thus essential for accurate translation. In Pseudomonas aeruginosa (strain LESB58), this protein is Large ribosomal subunit protein bL12.